A 703-amino-acid chain; its full sequence is Fatty acid oxidation complex subunit alpha (703 aa).

The segment at 1–190 is enoyl-CoA hydratase; the sequence is MSEQKAFSLN…KLGVVDACVP (190 aa). The 3-hydroxyacyl-CoA dehydrogenase stretch occupies residues 308–703; sequence AAVKKVGVLG…TRAGEGRTFY (396 aa).

In the N-terminal section; belongs to the enoyl-CoA hydratase/isomerase family. This sequence in the central section; belongs to the 3-hydroxyacyl-CoA dehydrogenase family. As to quaternary structure, heterotetramer of two alpha chains (FadJ) and two beta chains (FadI).

The protein localises to the cytoplasm. It carries out the reaction a (3S)-3-hydroxyacyl-CoA = a (2E)-enoyl-CoA + H2O. The catalysed reaction is a 4-saturated-(3S)-3-hydroxyacyl-CoA = a (3E)-enoyl-CoA + H2O. It catalyses the reaction a (3S)-3-hydroxyacyl-CoA + NAD(+) = a 3-oxoacyl-CoA + NADH + H(+). The enzyme catalyses (3S)-3-hydroxybutanoyl-CoA = (3R)-3-hydroxybutanoyl-CoA. Its pathway is lipid metabolism; fatty acid beta-oxidation. Functionally, catalyzes the formation of a hydroxyacyl-CoA by addition of water on enoyl-CoA. Also exhibits 3-hydroxyacyl-CoA epimerase and 3-hydroxyacyl-CoA dehydrogenase activities. This chain is Fatty acid oxidation complex subunit alpha, found in Vibrio parahaemolyticus serotype O3:K6 (strain RIMD 2210633).